The chain runs to 651 residues: Histone-lysine N-methyltransferase family member SUVH2 (651 aa).

Residues 1-28 are disordered; sequence MSTLLPFPDLNLMPDSQSSTAGTTAGDT. The segment covering 15–28 has biased composition (low complexity); sequence DSQSSTAGTTAGDT. Positions 202-358 constitute a YDG domain; the sequence is DKHIVGPVTG…KFRLVRIEGQ (157 aa). The Pre-SET domain maps to 434–492; sequence TGCECKLSCTDDCLCARKNGGEFAYDDNGHLLKGKHVVFECGEFCTCGPSCKSRVTQKG. Zn(2+) is bound by residues Cys-436, Cys-438, Cys-442, Cys-446, Cys-448, Cys-474, Cys-478, Cys-480, and Cys-484. Residues 495–638 enclose the SET domain; sequence NRLEVFRSKE…PLAELSLDYG (144 aa).

The protein belongs to the class V-like SAM-binding methyltransferase superfamily. Histone-lysine methyltransferase family. Suvar3-9 subfamily. Self-interacts. Interacts with DNA-directed RNA polymerase V subunit NRPE1 and with DRD1 and DMS3. Binds to MORC1/CRT1. In terms of tissue distribution, expressed at low levels in leaves stems and flowers.

The protein localises to the nucleus. The protein resides in the chromosome. It is found in the centromere. Histone methyltransferase family member that plays a central role in gene silencing. Together with MORC6 and SUVH9, regulates the silencing of some transposable elements (TEs). According to PubMed:15775980, it is required for normal methylation of 'Lys-9' and 'Lys-27' of histone H3, 'Lys-20' of H4, and cytosine, but PubMed:19043555 see no significant effect on histone methylation when the gene is mutated. According to PubMed:19043555, the protein does not bind S-adenosyl-L-methionine and lacks methyltransferase activity. Instead, it may function downstream of DRM2 in RNA-directed DNA methylation, binding to methylated DNA and recruiting DNA-directed RNA polymerase V to chromatin. The protein is Histone-lysine N-methyltransferase family member SUVH2 (SUVH2) of Arabidopsis thaliana (Mouse-ear cress).